Reading from the N-terminus, the 418-residue chain is Gamma-glutamyl phosphate reductase (418 aa).

Belongs to the gamma-glutamyl phosphate reductase family.

It is found in the cytoplasm. The enzyme catalyses L-glutamate 5-semialdehyde + phosphate + NADP(+) = L-glutamyl 5-phosphate + NADPH + H(+). The protein operates within amino-acid biosynthesis; L-proline biosynthesis; L-glutamate 5-semialdehyde from L-glutamate: step 2/2. Its function is as follows. Catalyzes the NADPH-dependent reduction of L-glutamate 5-phosphate into L-glutamate 5-semialdehyde and phosphate. The product spontaneously undergoes cyclization to form 1-pyrroline-5-carboxylate. The sequence is that of Gamma-glutamyl phosphate reductase from Thermobifida fusca (strain YX).